Reading from the N-terminus, the 751-residue chain is SKI family transcriptional corepressor 1 homolog-B (751 aa).

Disordered stretches follow at residues 1-30, 234-267, 386-434, 459-569, and 600-635; these read MESI…SGPP, SRKR…PHKT, LDVS…GIPP, YGNR…HGNK, and QRET…SEER. 2 stretches are compositionally biased toward polar residues: residues 14–27 and 244–259; these read SSCS…QSYS and SESS…TQGE. Residues 416-428 show a composition bias toward basic and acidic residues; sequence RNEEDKSGDESRS. Positions 479-491 are enriched in low complexity; that stretch reads SESSSYRSVSPDV. The span at 539–558 shows a compositional bias: polar residues; sequence QENTQMHTLNDLHSTNSSET. Composition is skewed to basic and acidic residues over residues 559–569, 603–612, and 620–635; these read RPSDMESHGNK, TSVKDVHEEE, and MEPK…SEER. The stretch at 666-704 forms a coiled coil; that stretch reads SMAKEELQKQLVEQVELRKKLEREFQNLKDSFQDQMKRE.

This sequence belongs to the SKI family.

Its subcellular location is the nucleus. Functionally, may inhibit BMP signaling. In Danio rerio (Zebrafish), this protein is SKI family transcriptional corepressor 1 homolog-B (skor1b).